Reading from the N-terminus, the 327-residue chain is AA9 family lytic polysaccharide monooxygenase G (327 aa).

The first 20 residues, 1–20, serve as a signal peptide directing secretion; it reads MKLNLASLCFLASIAPLVSG. The Cu(2+) site is built by histidine 21 and histidine 96. A disulfide bridge connects residues cysteine 62 and cysteine 185. O2 is bound at residue histidine 172. A Cu(2+)-binding site is contributed by tyrosine 182. Asparagine 290 carries an N-linked (GlcNAc...) asparagine glycan. A CBM1 domain is found at 291 to 327; sequence GTIKKYYQCGGQGWTGSGSCEAGTSCREWNTWYFQCV.

The protein belongs to the polysaccharide monooxygenase AA9 family. Requires Cu(2+) as cofactor.

The protein resides in the secreted. The catalysed reaction is [(1-&gt;4)-beta-D-glucosyl]n+m + reduced acceptor + O2 = 4-dehydro-beta-D-glucosyl-[(1-&gt;4)-beta-D-glucosyl]n-1 + [(1-&gt;4)-beta-D-glucosyl]m + acceptor + H2O.. Its function is as follows. Lytic polysaccharide monooxygenase (LPMO) that depolymerizes crystalline and amorphous polysaccharides via the oxidation of scissile alpha- or beta-(1-4)-glycosidic bonds, yielding C1 or C4 oxidation products. Catalysis by LPMOs requires the reduction of the active-site copper from Cu(II) to Cu(I) by a reducing agent and H(2)O(2) or O(2) as a cosubstrate. The polypeptide is AA9 family lytic polysaccharide monooxygenase G (Aspergillus tamarii).